We begin with the raw amino-acid sequence, 283 residues long: 4-diphosphocytidyl-2-C-methyl-D-erythritol kinase (283 aa).

Lysine 10 is a catalytic residue. Position 99 to 109 (proline 99 to serine 109) interacts with ATP. Residue aspartate 141 is part of the active site.

Belongs to the GHMP kinase family. IspE subfamily. Homodimer.

The catalysed reaction is 4-CDP-2-C-methyl-D-erythritol + ATP = 4-CDP-2-C-methyl-D-erythritol 2-phosphate + ADP + H(+). Its pathway is isoprenoid biosynthesis; isopentenyl diphosphate biosynthesis via DXP pathway; isopentenyl diphosphate from 1-deoxy-D-xylulose 5-phosphate: step 3/6. Catalyzes the phosphorylation of the position 2 hydroxy group of 4-diphosphocytidyl-2C-methyl-D-erythritol. The sequence is that of 4-diphosphocytidyl-2-C-methyl-D-erythritol kinase from Escherichia coli O81 (strain ED1a).